Consider the following 226-residue polypeptide: tRNA (guanine-N(7)-)-methyltransferase (226 aa).

S-adenosyl-L-methionine-binding residues include E59, E84, D111, and D134. D134 is an active-site residue. Residue K138 coordinates substrate. The interaction with RNA stretch occupies residues 140-145 (RHNKRR). Substrate is bound by residues D170 and 205 to 208 (TKFE).

This sequence belongs to the class I-like SAM-binding methyltransferase superfamily. TrmB family.

It catalyses the reaction guanosine(46) in tRNA + S-adenosyl-L-methionine = N(7)-methylguanosine(46) in tRNA + S-adenosyl-L-homocysteine. It participates in tRNA modification; N(7)-methylguanine-tRNA biosynthesis. Functionally, catalyzes the formation of N(7)-methylguanine at position 46 (m7G46) in tRNA. The polypeptide is tRNA (guanine-N(7)-)-methyltransferase (Chromobacterium violaceum (strain ATCC 12472 / DSM 30191 / JCM 1249 / CCUG 213 / NBRC 12614 / NCIMB 9131 / NCTC 9757 / MK)).